A 295-amino-acid chain; its full sequence is Nucleotide-binding protein Lxx11490 (295 aa).

Position 19–26 (19–26) interacts with ATP; it reads GMSGAGRS. 70–73 provides a ligand contact to GTP; sequence DVRG.

Belongs to the RapZ-like family.

Displays ATPase and GTPase activities. The sequence is that of Nucleotide-binding protein Lxx11490 from Leifsonia xyli subsp. xyli (strain CTCB07).